The sequence spans 256 residues: Imidazole glycerol phosphate synthase subunit HisF (256 aa).

Active-site residues include Asp11 and Asp130.

It belongs to the HisA/HisF family. Heterodimer of HisH and HisF.

It is found in the cytoplasm. It catalyses the reaction 5-[(5-phospho-1-deoxy-D-ribulos-1-ylimino)methylamino]-1-(5-phospho-beta-D-ribosyl)imidazole-4-carboxamide + L-glutamine = D-erythro-1-(imidazol-4-yl)glycerol 3-phosphate + 5-amino-1-(5-phospho-beta-D-ribosyl)imidazole-4-carboxamide + L-glutamate + H(+). It functions in the pathway amino-acid biosynthesis; L-histidine biosynthesis; L-histidine from 5-phospho-alpha-D-ribose 1-diphosphate: step 5/9. IGPS catalyzes the conversion of PRFAR and glutamine to IGP, AICAR and glutamate. The HisF subunit catalyzes the cyclization activity that produces IGP and AICAR from PRFAR using the ammonia provided by the HisH subunit. This Cupriavidus pinatubonensis (strain JMP 134 / LMG 1197) (Cupriavidus necator (strain JMP 134)) protein is Imidazole glycerol phosphate synthase subunit HisF.